The following is a 316-amino-acid chain: L-lactate dehydrogenase 1 (316 aa).

NAD(+)-binding residues include V17, D38, K43, and Y69. Residues R92 and 124–127 (NPVD) each bind substrate. NAD(+) contacts are provided by residues 122–124 (VSN) and T147. 152-155 (DTSR) is a substrate binding site. The Proton acceptor role is filled by H179. Position 234 (T234) interacts with substrate.

It belongs to the LDH/MDH superfamily. LDH family. As to quaternary structure, homotetramer.

It is found in the cytoplasm. The catalysed reaction is (S)-lactate + NAD(+) = pyruvate + NADH + H(+). It functions in the pathway fermentation; pyruvate fermentation to lactate; (S)-lactate from pyruvate: step 1/1. In terms of biological role, catalyzes the conversion of lactate to pyruvate. The sequence is that of L-lactate dehydrogenase 1 from Bifidobacterium longum subsp. longum (strain ATCC 15707 / DSM 20219 / JCM 1217 / NCTC 11818 / E194b).